Reading from the N-terminus, the 1556-residue chain is uncharacterized protein (1556 aa).

At Ser2 the chain carries N-acetylserine. Positions 145-156 are enriched in basic and acidic residues; the sequence is NQLENRKSLERK. The disordered stretch occupies residues 145–170; it reads NQLENRKSLERKPSRKRRKKNSNVND. The Helicase ATP-binding domain occupies 378–583; the sequence is SGDYPVCAKG…MIMSYLKLHP (206 aa). An ATP-binding site is contributed by 391-398; the sequence is EEMGLGKT. The residue at position 810 (Ser810) is a Phosphoserine. The segment at 810-850 is disordered; that stretch reads SEDEDEHMDERFGEKETSSGDESDREINGAKNHDNHNNDGM. 2 stretches are compositionally biased toward basic and acidic residues: residues 817 to 827 and 834 to 846; these read MDERFGEKETS and REIN…DNHN. The RING-type zinc-finger motif lies at 1239-1277; it reads CSICLGEVEIGAIIKCGHYFCKSCILTWLRAHSKCPICK. Residues 1297–1309 are compositionally biased toward basic and acidic residues; it reads REKEIQEPRREGA. 2 disordered regions span residues 1297-1319 and 1508-1534; these read REKE…SNEN and EKSK…AKFE. The segment covering 1310–1319 has biased composition (low complexity); the sequence is DSSQDNSNEN. In terms of domain architecture, Helicase C-terminal spans 1363–1531; sequence KLISYLRLKS…ETDNEESDDA (169 aa). The span at 1508-1518 shows a compositional bias: basic and acidic residues; it reads EKSKKGDKYDE. A compositionally biased stretch (acidic residues) spans 1519-1529; sequence AQDETDNEESD.

The protein belongs to the SNF2/RAD54 helicase family.

Its subcellular location is the nucleus. In terms of biological role, is probably involved in a pathway contributing to genomic integrity. This is an uncharacterized protein from Saccharomyces cerevisiae (strain ATCC 204508 / S288c) (Baker's yeast).